The sequence spans 30 residues: Unknown protein from spot 365 of 2D-PAGE of etiolated coleoptile (30 aa).

This sequence belongs to the zinc-containing alcohol dehydrogenase family.

This Zea mays (Maize) protein is Unknown protein from spot 365 of 2D-PAGE of etiolated coleoptile.